Reading from the N-terminus, the 345-residue chain is Anthranilate phosphoribosyltransferase (345 aa).

Residues Gly-79, 82 to 83, Thr-87, 89 to 92, 106 to 114, and Ser-118 each bind 5-phospho-alpha-D-ribose 1-diphosphate; these read GD, NVST, and KHGNRAVSG. Gly-79 is a binding site for anthranilate. Residue Ser-91 coordinates Mg(2+). Residue Asn-109 participates in anthranilate binding. Residue Arg-164 coordinates anthranilate. Mg(2+) is bound by residues Asp-223 and Glu-224.

It belongs to the anthranilate phosphoribosyltransferase family. As to quaternary structure, homodimer. It depends on Mg(2+) as a cofactor.

The enzyme catalyses N-(5-phospho-beta-D-ribosyl)anthranilate + diphosphate = 5-phospho-alpha-D-ribose 1-diphosphate + anthranilate. It functions in the pathway amino-acid biosynthesis; L-tryptophan biosynthesis; L-tryptophan from chorismate: step 2/5. In terms of biological role, catalyzes the transfer of the phosphoribosyl group of 5-phosphorylribose-1-pyrophosphate (PRPP) to anthranilate to yield N-(5'-phosphoribosyl)-anthranilate (PRA). The protein is Anthranilate phosphoribosyltransferase of Saccharolobus islandicus (strain M.16.27) (Sulfolobus islandicus).